Here is a 293-residue protein sequence, read N- to C-terminus: Shikimate dehydrogenase (NADP(+)) (293 aa).

Residues 26 to 28 (SKS) and T73 each bind shikimate. Catalysis depends on K77, which acts as the Proton acceptor. An NADP(+)-binding site is contributed by E89. The shikimate site is built by N98 and D113. Residues 137–141 (GAGGA), 161–166 (NRTRQR), and I231 contribute to the NADP(+) site. Position 233 (Y233) interacts with shikimate. G254 serves as a coordination point for NADP(+).

It belongs to the shikimate dehydrogenase family. In terms of assembly, homodimer.

It catalyses the reaction shikimate + NADP(+) = 3-dehydroshikimate + NADPH + H(+). It functions in the pathway metabolic intermediate biosynthesis; chorismate biosynthesis; chorismate from D-erythrose 4-phosphate and phosphoenolpyruvate: step 4/7. Functionally, involved in the biosynthesis of the chorismate, which leads to the biosynthesis of aromatic amino acids. Catalyzes the reversible NADPH linked reduction of 3-dehydroshikimate (DHSA) to yield shikimate (SA). This is Shikimate dehydrogenase (NADP(+)) from Bartonella quintana (strain Toulouse) (Rochalimaea quintana).